The chain runs to 614 residues: 2-succinyl-5-enolpyruvyl-6-hydroxy-3-cyclohexene-1-carboxylate synthase (614 aa).

This sequence belongs to the TPP enzyme family. MenD subfamily. In terms of assembly, homodimer. Mg(2+) is required as a cofactor. It depends on Mn(2+) as a cofactor. Thiamine diphosphate serves as cofactor.

The enzyme catalyses isochorismate + 2-oxoglutarate + H(+) = 5-enolpyruvoyl-6-hydroxy-2-succinyl-cyclohex-3-ene-1-carboxylate + CO2. Its pathway is quinol/quinone metabolism; 1,4-dihydroxy-2-naphthoate biosynthesis; 1,4-dihydroxy-2-naphthoate from chorismate: step 2/7. It functions in the pathway quinol/quinone metabolism; menaquinone biosynthesis. Its function is as follows. Catalyzes the thiamine diphosphate-dependent decarboxylation of 2-oxoglutarate and the subsequent addition of the resulting succinic semialdehyde-thiamine pyrophosphate anion to isochorismate to yield 2-succinyl-5-enolpyruvyl-6-hydroxy-3-cyclohexene-1-carboxylate (SEPHCHC). The protein is 2-succinyl-5-enolpyruvyl-6-hydroxy-3-cyclohexene-1-carboxylate synthase of Sorangium cellulosum (strain So ce56) (Polyangium cellulosum (strain So ce56)).